A 201-amino-acid polypeptide reads, in one-letter code: Small ribosomal subunit protein uS4c (201 aa).

Positions 20–44 (GLTNKKPRAGSDLRNQSRSGKKSQY) are disordered. Positions 89–150 (MRLDNILFRL…EQKSKALIQI (62 aa)) constitute an S4 RNA-binding domain.

This sequence belongs to the universal ribosomal protein uS4 family. As to quaternary structure, part of the 30S ribosomal subunit. Contacts protein S5. The interaction surface between S4 and S5 is involved in control of translational fidelity.

The protein resides in the plastid. Its subcellular location is the chloroplast. Its function is as follows. One of the primary rRNA binding proteins, it binds directly to 16S rRNA where it nucleates assembly of the body of the 30S subunit. Functionally, with S5 and S12 plays an important role in translational accuracy. The protein is Small ribosomal subunit protein uS4c (rps4) of Nicotiana tomentosiformis (Tobacco).